Here is a 380-residue protein sequence, read N- to C-terminus: Alkanesulfonate monooxygenase (380 aa).

This sequence belongs to the SsuD family. As to quaternary structure, homotetramer.

The catalysed reaction is an alkanesulfonate + FMNH2 + O2 = an aldehyde + FMN + sulfite + H2O + 2 H(+). Functionally, catalyzes the desulfonation of aliphatic sulfonates. The chain is Alkanesulfonate monooxygenase from Pectobacterium carotovorum subsp. carotovorum (strain PC1).